Consider the following 153-residue polypeptide: Superoxide dismutase [Cu-Zn] (153 aa).

Cu cation contacts are provided by histidine 46, histidine 48, and histidine 63. Cysteine 57 and cysteine 146 are oxidised to a cystine. Residues histidine 63, histidine 71, histidine 80, and aspartate 83 each coordinate Zn(2+). Cu cation is bound at residue histidine 120.

It belongs to the Cu-Zn superoxide dismutase family. Homodimer. Cu cation serves as cofactor. Zn(2+) is required as a cofactor.

It is found in the cytoplasm. The catalysed reaction is 2 superoxide + 2 H(+) = H2O2 + O2. Its function is as follows. Destroys radicals which are normally produced within the cells and which are toxic to biological systems. The chain is Superoxide dismutase [Cu-Zn] (SODCC) from Solidago canadensis var. scabra (Tall goldenrod).